Consider the following 192-residue polypeptide: 21.7 kDa class VI heat shock protein (192 aa).

Positions 80-192 constitute a sHSP domain; it reads SLRSLGQCRV…IPKINSKNKF (113 aa).

It belongs to the small heat shock protein (HSP20) family. As to quaternary structure, may form oligomeric structures.

It is found in the cytoplasm. The chain is 21.7 kDa class VI heat shock protein (HSP21.7) from Arabidopsis thaliana (Mouse-ear cress).